Consider the following 63-residue polypeptide: Large ribosomal subunit protein bL28 (63 aa).

It belongs to the bacterial ribosomal protein bL28 family.

The chain is Large ribosomal subunit protein bL28 from Geotalea daltonii (strain DSM 22248 / JCM 15807 / FRC-32) (Geobacter daltonii).